The primary structure comprises 124 residues: Immunoglobulin lambda variable 5-52 (124 aa).

The N-terminal stretch at 1-19 (MAWTLLLLVLLSHCTGSLS) is a signal peptide. A framework-1 region spans residues 20–44 (QPVLTQPSSHSASSGASVRLTCMLS). The region spanning 21–124 (PVLTQPSSHS…CGTWHSNSKT (104 aa)) is the Ig-like domain. A disulfide bond links cysteine 41 and cysteine 115. A complementarity-determining-1 region spans residues 45–53 (SGFSVGDFW). The tract at residues 54–70 (IRWYQQKPGNPPRYLLY) is framework-2. Positions 71–77 (YHSDSNK) are complementarity-determining-2. The tract at residues 78-115 (GQGSGVPSRFSGSNDASANAGILRISGLQPEDEADYYC) is framework-3. Residues 116 to 124 (GTWHSNSKT) form a complementarity-determining-3 region.

In terms of assembly, immunoglobulins are composed of two identical heavy chains and two identical light chains; disulfide-linked.

The protein localises to the secreted. It localises to the cell membrane. V region of the variable domain of immunoglobulin light chains that participates in the antigen recognition. Immunoglobulins, also known as antibodies, are membrane-bound or secreted glycoproteins produced by B lymphocytes. In the recognition phase of humoral immunity, the membrane-bound immunoglobulins serve as receptors which, upon binding of a specific antigen, trigger the clonal expansion and differentiation of B lymphocytes into immunoglobulins-secreting plasma cells. Secreted immunoglobulins mediate the effector phase of humoral immunity, which results in the elimination of bound antigens. The antigen binding site is formed by the variable domain of one heavy chain, together with that of its associated light chain. Thus, each immunoglobulin has two antigen binding sites with remarkable affinity for a particular antigen. The variable domains are assembled by a process called V-(D)-J rearrangement and can then be subjected to somatic hypermutations which, after exposure to antigen and selection, allow affinity maturation for a particular antigen. The sequence is that of Immunoglobulin lambda variable 5-52 from Homo sapiens (Human).